Reading from the N-terminus, the 504-residue chain is Maturase K (504 aa).

This sequence belongs to the intron maturase 2 family. MatK subfamily.

The protein resides in the plastid. It localises to the chloroplast. Usually encoded in the trnK tRNA gene intron. Probably assists in splicing its own and other chloroplast group II introns. In Hamamelis virginiana (Witch-hazel), this protein is Maturase K.